Consider the following 550-residue polypeptide: CTP synthase (550 aa).

Residues 1–270 are amidoligase domain; it reads MTKFVFVTGG…DRLICEELRL (270 aa). S13 provides a ligand contact to CTP. S13 contributes to the UTP binding site. ATP is bound by residues 14–19 and D71; that span reads SLGKGI. Positions 71 and 144 each coordinate Mg(2+). CTP-binding positions include 151-153, 191-196, and K227; these read DIE and KTKPTQ. Residues 191-196 and K227 contribute to the UTP site; that span reads KTKPTQ. In terms of domain architecture, Glutamine amidotransferase type-1 spans 295–547; that stretch reads TIGMVGKYVD…VEAALASQQR (253 aa). Residue G356 participates in L-glutamine binding. Catalysis depends on C383, which acts as the Nucleophile; for glutamine hydrolysis. L-glutamine is bound by residues 384–387, E407, and R473; that span reads LGMQ. Active-site residues include H520 and E522.

The protein belongs to the CTP synthase family. Homotetramer.

It carries out the reaction UTP + L-glutamine + ATP + H2O = CTP + L-glutamate + ADP + phosphate + 2 H(+). It catalyses the reaction L-glutamine + H2O = L-glutamate + NH4(+). The catalysed reaction is UTP + NH4(+) + ATP = CTP + ADP + phosphate + 2 H(+). It functions in the pathway pyrimidine metabolism; CTP biosynthesis via de novo pathway; CTP from UDP: step 2/2. With respect to regulation, allosterically activated by GTP, when glutamine is the substrate; GTP has no effect on the reaction when ammonia is the substrate. The allosteric effector GTP functions by stabilizing the protein conformation that binds the tetrahedral intermediate(s) formed during glutamine hydrolysis. Inhibited by the product CTP, via allosteric rather than competitive inhibition. Catalyzes the ATP-dependent amination of UTP to CTP with either L-glutamine or ammonia as the source of nitrogen. Regulates intracellular CTP levels through interactions with the four ribonucleotide triphosphates. The polypeptide is CTP synthase (Cupriavidus necator (strain ATCC 17699 / DSM 428 / KCTC 22496 / NCIMB 10442 / H16 / Stanier 337) (Ralstonia eutropha)).